Consider the following 414-residue polypeptide: Cyclic di-GMP phosphodiesterase PA4108 (414 aa).

Residues 133–330 (ISASVLRHPN…YPVGALVRLE (198 aa)) enclose the HD-GYP domain. A divalent metal cation-binding residues include H160, H192, D193, H221, H246, and H247.

In terms of assembly, monomer.

The catalysed reaction is 3',3'-c-di-GMP + 2 H2O = 2 GMP + 2 H(+). Activated by Mg(2+) and Mn(2+). In terms of biological role, phosphodiesterase (PDE) that catalyzes the hydrolysis of cyclic diguanylate (c-di-GMP) to GMP. Hydrolyzes c-di-GMP to GMP in a two-step reaction, via the linear intermediate 5'-phosphoguanylyl(3'-&gt;5')guanosine (pGpG). In vitro, can use pGpG as an alternative substrate and hydrolyze it into GMP. Acts in regulation of motility, synthesis of virulence determinants and biofilm architecture. This Pseudomonas aeruginosa (strain ATCC 15692 / DSM 22644 / CIP 104116 / JCM 14847 / LMG 12228 / 1C / PRS 101 / PAO1) protein is Cyclic di-GMP phosphodiesterase PA4108.